The chain runs to 258 residues: L-aminoadipate-semialdehyde dehydrogenase-phosphopantetheinyl transferase (258 aa).

This sequence belongs to the P-Pant transferase superfamily. AcpS family.

It catalyses the reaction apo-[ACP] + CoA = holo-[ACP] + adenosine 3',5'-bisphosphate + H(+). In terms of biological role, catalyzes the transfer of a 4'-phosphopantetheine moiety from coenzyme A to a serine residue of acceptor proteins, such as alpha-aminoadipate reductase. Necessary for alpha-aminoadipate reductase activity. This chain is L-aminoadipate-semialdehyde dehydrogenase-phosphopantetheinyl transferase (LYS5), found in Candida glabrata (strain ATCC 2001 / BCRC 20586 / JCM 3761 / NBRC 0622 / NRRL Y-65 / CBS 138) (Yeast).